A 228-amino-acid polypeptide reads, in one-letter code: MQKLKQQVFEANMDLPRYGLVTFTWGNVSAIDRERGLVVIKPSGIAYESMKANDMVVVDMSGKVVEGEYRPSSDTATHLELYRRYPSLGGIVHTHSTHATAWAQAGLAIPALGTTHADYFFGDIPCTRGLSEEEVQGEYELNTGKVIIETLGDAEPLHTPGIVVYQHGPFAWGKDAHDAVHNAVVMEEVAKMAWIARGINPQLNHIDSYLMNKHFMRKHGPNAYYGQK.

Residues 26–27 (GN), 43–44 (SG), and 72–73 (SS) each bind substrate. Residues Asp74, His93, and His95 each coordinate Zn(2+). Asp118 serves as the catalytic Proton donor/acceptor. His167 lines the Zn(2+) pocket. Tyr225 functions as the Proton donor/acceptor in the catalytic mechanism.

Belongs to the aldolase class II family. AraD/FucA subfamily. Zn(2+) serves as cofactor.

It carries out the reaction L-ribulose 5-phosphate = D-xylulose 5-phosphate. Its pathway is cofactor degradation; L-ascorbate degradation; D-xylulose 5-phosphate from L-ascorbate: step 4/4. Functionally, catalyzes the isomerization of L-ribulose 5-phosphate to D-xylulose 5-phosphate. Is involved in the anaerobic L-ascorbate utilization. The sequence is that of L-ribulose-5-phosphate 4-epimerase UlaF from Escherichia fergusonii (strain ATCC 35469 / DSM 13698 / CCUG 18766 / IAM 14443 / JCM 21226 / LMG 7866 / NBRC 102419 / NCTC 12128 / CDC 0568-73).